The sequence spans 142 residues: Putative mating-type transcription factor (142 aa).

It is found in the nucleus. This is Putative mating-type transcription factor from Eremothecium gossypii (strain ATCC 10895 / CBS 109.51 / FGSC 9923 / NRRL Y-1056) (Yeast).